A 161-amino-acid chain; its full sequence is Phosphopantetheine adenylyltransferase (161 aa).

Threonine 9 is a substrate binding site. Residues 9–10 (TF) and histidine 17 each bind ATP. 3 residues coordinate substrate: lysine 41, leucine 73, and arginine 87. ATP is bound by residues 88–90 (GLR), glutamate 98, and 123–129 (YQFISGT).

It belongs to the bacterial CoaD family. Homohexamer. Mg(2+) is required as a cofactor.

The protein resides in the cytoplasm. The catalysed reaction is (R)-4'-phosphopantetheine + ATP + H(+) = 3'-dephospho-CoA + diphosphate. The protein operates within cofactor biosynthesis; coenzyme A biosynthesis; CoA from (R)-pantothenate: step 4/5. Reversibly transfers an adenylyl group from ATP to 4'-phosphopantetheine, yielding dephospho-CoA (dPCoA) and pyrophosphate. This chain is Phosphopantetheine adenylyltransferase, found in Cupriavidus necator (strain ATCC 17699 / DSM 428 / KCTC 22496 / NCIMB 10442 / H16 / Stanier 337) (Ralstonia eutropha).